The following is a 284-amino-acid chain: RAD52 motif-containing protein 1 (284 aa).

Residues 1-92 (MAELVPFAVP…KQLFQKSPVK (92 aa)) are necessary for nuclear localization and for nucleolar accumulation in response to heat shock. The RRM domain maps to 15–98 (KTLLVWELSS…SPVKVRLGTR (84 aa)). Residues 90 to 133 (PVKVRLGTRHKAVQHQALALNSSKCQELANYYFGFNGCSKRIIK) are necessary for nuclear and nucleolar localization.

Homodimer. In terms of tissue distribution, expressed in testis.

The protein localises to the nucleus. It is found in the cytoplasm. The protein resides in the nucleolus. Its subcellular location is the PML body. It localises to the cajal body. In terms of biological role, may confer resistance to the antitumor agent cisplatin. Binds to DNA and RNA. The chain is RAD52 motif-containing protein 1 (RDM1) from Homo sapiens (Human).